Here is a 209-residue protein sequence, read N- to C-terminus: Imidazole glycerol phosphate synthase subunit HisH (209 aa).

Residues 1–205 (MIAIIDYGMG…KGVVESWKSS (205 aa)) enclose the Glutamine amidotransferase type-1 domain. Cys79 (nucleophile) is an active-site residue. Active-site residues include His180 and Glu182.

As to quaternary structure, heterodimer of HisH and HisF.

The protein localises to the cytoplasm. It catalyses the reaction 5-[(5-phospho-1-deoxy-D-ribulos-1-ylimino)methylamino]-1-(5-phospho-beta-D-ribosyl)imidazole-4-carboxamide + L-glutamine = D-erythro-1-(imidazol-4-yl)glycerol 3-phosphate + 5-amino-1-(5-phospho-beta-D-ribosyl)imidazole-4-carboxamide + L-glutamate + H(+). It carries out the reaction L-glutamine + H2O = L-glutamate + NH4(+). The protein operates within amino-acid biosynthesis; L-histidine biosynthesis; L-histidine from 5-phospho-alpha-D-ribose 1-diphosphate: step 5/9. IGPS catalyzes the conversion of PRFAR and glutamine to IGP, AICAR and glutamate. The HisH subunit catalyzes the hydrolysis of glutamine to glutamate and ammonia as part of the synthesis of IGP and AICAR. The resulting ammonia molecule is channeled to the active site of HisF. The sequence is that of Imidazole glycerol phosphate synthase subunit HisH from Bacillus cereus (strain ATCC 10987 / NRS 248).